Here is a 489-residue protein sequence, read N- to C-terminus: Interferon gamma receptor 1 (489 aa).

An N-terminal signal peptide occupies residues 1-17; it reads MALLFLLPLVMQGVSRA. Topologically, residues 18 to 245 are extracellular; the sequence is EMGTADLGPS…ITIFNSSIKG (228 aa). N-linked (GlcNAc...) asparagine glycosylation is found at Asn34, Asn79, and Asn86. Cys77 and Cys85 are joined by a disulfide. Cys122 and Cys167 are disulfide-bonded. Residue Asn179 is glycosylated (N-linked (GlcNAc...) asparagine). Intrachain disulfides connect Cys195–Cys200 and Cys214–Cys235. A glycan (N-linked (GlcNAc...) asparagine) is linked at Asn240. The helical transmembrane segment at 246–266 threads the bilayer; that stretch reads SLWIPVVAALLLFLVLSLVFI. Residues 267–489 are Cytoplasmic-facing; the sequence is CFYIKKINPL…RPTEDSKEFS (223 aa). A disordered region spans residues 329-437; that stretch reads ATVPGMHTED…SEFPPNNKGE (109 aa). Over residues 335-348 the composition is skewed to basic and acidic residues; it reads HTEDNPGKVEHTEE. The span at 349 to 360 shows a compositional bias: polar residues; that stretch reads LSSITEVVTTEE. Position 369 is a phosphoserine (Ser369). Thr372 carries the post-translational modification Phosphothreonine. Phosphoserine is present on Ser378. Positions 379–391 are enriched in low complexity; sequence SSPLSSNQSEPGS. Positions 401 to 412 are enriched in basic and acidic residues; sequence NCSESDHSRNGF. Ser403 bears the Phosphoserine mark. Over residues 415 to 429 the composition is skewed to low complexity; it reads DSSCLESHSSLSDSE. Phosphotyrosine is present on Tyr457.

The protein belongs to the type II cytokine receptor family. As to quaternary structure, monomer. Heterodimer with IFNGR2, to form the IFNG receptor complex. Interacts with JAK1. Interacts (when phosphorylated) with STAT1. Interacts with SOCS1. Phosphorylated at Ser/Thr residues. Phosphorylation of Tyr-457 is required for IFNG receptor signal transduction. Influenza virus infection leads to phosphorylation in a CSNK1A1-dependent manner. Post-translationally, ubiquitinated after phosphorylation in a CSNK1A1-dependent manner, leading to the lysosome-dependent degradation. Proteasomally degraded through 'Lys-48'-mediated ubiquitination. Ubiquitination is necessary for efficient IFNGR1 signaling.

The protein localises to the cell membrane. In terms of biological role, receptor subunit for interferon gamma/INFG that plays crucial roles in antimicrobial, antiviral, and antitumor responses by activating effector immune cells and enhancing antigen presentation. Associates with transmembrane accessory factor IFNGR2 to form a functional receptor. Upon ligand binding, the intracellular domain of IFNGR1 opens out to allow association of downstream signaling components JAK1 and JAK2. In turn, activated JAK1 phosphorylates IFNGR1 to form a docking site for STAT1. Subsequent phosphorylation of STAT1 leads to dimerization, translocation to the nucleus, and stimulation of target gene transcription. STAT3 can also be activated in a similar manner although activation seems weaker. IFNGR1 intracellular domain phosphorylation also provides a docking site for SOCS1 that regulates the JAK-STAT pathway by competing with STAT1 binding to IFNGR1. This is Interferon gamma receptor 1 from Homo sapiens (Human).